The chain runs to 200 residues: Dephospho-CoA kinase (200 aa).

The 199-residue stretch at 2–200 (LIAVVGKAGV…CHHGHYQTPK (199 aa)) folds into the DPCK domain. 10–15 (GVGKTT) provides a ligand contact to ATP.

Belongs to the CoaE family.

It is found in the cytoplasm. The catalysed reaction is 3'-dephospho-CoA + ATP = ADP + CoA + H(+). It functions in the pathway cofactor biosynthesis; coenzyme A biosynthesis; CoA from (R)-pantothenate: step 5/5. Catalyzes the phosphorylation of the 3'-hydroxyl group of dephosphocoenzyme A to form coenzyme A. The polypeptide is Dephospho-CoA kinase (Mycoplasma pneumoniae (strain ATCC 29342 / M129 / Subtype 1) (Mycoplasmoides pneumoniae)).